Reading from the N-terminus, the 918-residue chain is Serine/threonine-protein kinase D1 (918 aa).

Phosphotyrosine is present on Y93. Residues P144 to C194 form a Phorbol-ester/DAG-type 1 zinc finger. 4 positions are modified to phosphoserine: S203, S206, S217, and S221. The Phorbol-ester/DAG-type 2 zinc finger occupies P276–C326. Disordered stretches follow at residues S338–L362 and E380–N408. 2 stretches are compositionally biased toward acidic residues: residues V345–D355 and E387–E396. S351 is modified (phosphoserine). A phosphoserine; by MAPK13 mark is found at S403 and S407. In terms of domain architecture, PH spans T428–M547. Y438 carries the post-translational modification Phosphotyrosine. S454 bears the Phosphoserine mark. Position 469 is a phosphotyrosine; by ABL (Y469). A Phosphotyrosine modification is found at Y508. S554 is modified (phosphoserine). Residues I589 to L845 enclose the Protein kinase domain. Residues L595–V603 and K618 each bind ATP. The Proton acceptor role is filled by D712. S744 carries the post-translational modification Phosphoserine; by PKC/PRKCD. S748 carries the post-translational modification Phosphoserine; by autocatalysis and PKC/PRKCD. Y755 carries the post-translational modification Phosphotyrosine. S916 bears the Phosphoserine; by autocatalysis mark.

Belongs to the protein kinase superfamily. CAMK Ser/Thr protein kinase family. PKD subfamily. As to quaternary structure, interacts (via N-terminus) with ADAP1/CENTA1. Interacts with MAPK13. Interacts with DAPK1 in an oxidative stress-regulated manner. Interacts with USP28; the interaction induces phosphorylation of USP28 and activated KRAS-mediated stabilization of ZNF304. Interacts with AKAP13 (via C-terminal domain). Mg(2+) is required as a cofactor. Post-translationally, phosphorylated at Ser-403 and Ser-407 by MAPK13 during regulation of insulin secretion in pancreatic beta cells. Phosphorylated by DAPK1. Phosphorylated at Tyr-93 and by ABL at Tyr-469, which primes the kinase in response to oxidative stress, and promotes a second step activating phosphorylation at Ser-744/Ser-748 by PKRD. Phosphorylated on Ser-916 upon S.enterica infection in macrophages.

The protein resides in the cytoplasm. It localises to the cell membrane. Its subcellular location is the golgi apparatus. The protein localises to the trans-Golgi network. It catalyses the reaction L-seryl-[protein] + ATP = O-phospho-L-seryl-[protein] + ADP + H(+). The enzyme catalyses L-threonyl-[protein] + ATP = O-phospho-L-threonyl-[protein] + ADP + H(+). With respect to regulation, activated by DAG and phorbol esters. Phorbol-ester/DAG-type domain 1 binds DAG with high affinity and appears to play the dominant role in mediating translocation to the cell membrane and trans-Golgi network. Phorbol-ester/DAG-type domain 2 binds phorbol ester with higher affinity. Autophosphorylation of Ser-748 and phosphorylation of Ser-744 by PKC relieves auto-inhibition by the PH domain. Phosphorylation on Tyr-469 by the SRC-ABL1 pathway in response to oxidative stress, is also required for activation. Activated by DAPK1 under oxidative stress. Its function is as follows. Serine/threonine-protein kinase that converts transient diacylglycerol (DAG) signals into prolonged physiological effects downstream of PKC, and is involved in the regulation of MAPK8/JNK1 and Ras signaling, Golgi membrane integrity and trafficking, cell survival through NF-kappa-B activation, cell migration, cell differentiation by mediating HDAC7 nuclear export, cell proliferation via MAPK1/3 (ERK1/2) signaling, and plays a role in cardiac hypertrophy, VEGFA-induced angiogenesis, genotoxic-induced apoptosis and flagellin-stimulated inflammatory response. Phosphorylates the epidermal growth factor receptor (EGFR) on dual threonine residues, which leads to the suppression of epidermal growth factor (EGF)-induced MAPK8/JNK1 activation and subsequent JUN phosphorylation. Phosphorylates RIN1, inducing RIN1 binding to 14-3-3 proteins YWHAB, YWHAE and YWHAZ and increased competition with RAF1 for binding to GTP-bound form of Ras proteins (NRAS, HRAS and KRAS). Acts downstream of the heterotrimeric G-protein beta/gamma-subunit complex to maintain the structural integrity of the Golgi membranes, and is required for protein transport along the secretory pathway. In the trans-Golgi network (TGN), regulates the fission of transport vesicles that are on their way to the plasma membrane. May act by activating the lipid kinase phosphatidylinositol 4-kinase beta (PI4KB) at the TGN for the local synthesis of phosphorylated inositol lipids, which induces a sequential production of DAG, phosphatidic acid (PA) and lyso-PA (LPA) that are necessary for membrane fission and generation of specific transport carriers to the cell surface. Under oxidative stress, is phosphorylated at Tyr-469 via SRC-ABL1 and contributes to cell survival by activating IKK complex and subsequent nuclear translocation and activation of NFKB1. Involved in cell migration by regulating integrin alpha-5/beta-3 recycling and promoting its recruitment in newly forming focal adhesion. In osteoblast differentiation, mediates the bone morphogenetic protein 2 (BMP2)-induced nuclear export of HDAC7, which results in the inhibition of HDAC7 transcriptional repression of RUNX2. In neurons, plays an important role in neuronal polarity by regulating the biogenesis of TGN-derived dendritic vesicles, and is involved in the maintenance of dendritic arborization and Golgi structure in hippocampal cells. May potentiate mitogenesis induced by the neuropeptide bombesin or vasopressin by mediating an increase in the duration of MAPK1/3 (ERK1/2) signaling, which leads to accumulation of immediate-early gene products including FOS that stimulate cell cycle progression. Plays an important role in the proliferative response induced by low calcium in keratinocytes, through sustained activation of MAPK1/3 (ERK1/2) pathway. Downstream of novel PKC signaling, plays a role in cardiac hypertrophy by phosphorylating HDAC5, which in turn triggers XPO1/CRM1-dependent nuclear export of HDAC5, MEF2A transcriptional activation and induction of downstream target genes that promote myocyte hypertrophy and pathological cardiac remodeling. Mediates cardiac troponin I (TNNI3) phosphorylation at the PKA sites, which results in reduced myofilament calcium sensitivity, and accelerated crossbridge cycling kinetics. The PRKD1-HDAC5 pathway is also involved in angiogenesis by mediating VEGFA-induced specific subset of gene expression, cell migration, and tube formation. In response to VEGFA, is necessary and required for HDAC7 phosphorylation which induces HDAC7 nuclear export and endothelial cell proliferation and migration. During apoptosis induced by cytarabine and other genotoxic agents, PRKD1 is cleaved by caspase-3 at Asp-378, resulting in activation of its kinase function and increased sensitivity of cells to the cytotoxic effects of genotoxic agents. In epithelial cells, is required for transducing flagellin-stimulated inflammatory responses by binding and phosphorylating TLR5, which contributes to MAPK14/p38 activation and production of inflammatory cytokines. Acts as an activator of NLRP3 inflammasome assembly by mediating phosphorylation of NLRP3. May play a role in inflammatory response by mediating activation of NF-kappa-B. May be involved in pain transmission by directly modulating TRPV1 receptor. Plays a role in activated KRAS-mediated stabilization of ZNF304 in colorectal cancer (CRC) cells. Regulates nuclear translocation of transcription factor TFEB in macrophages upon live S.enterica infection. This is Serine/threonine-protein kinase D1 (Prkd1) from Rattus norvegicus (Rat).